A 318-amino-acid chain; its full sequence is Ubiquitin-like domain-containing CTD phosphatase 1 (318 aa).

Alanine 2 bears the N-acetylalanine mark. Positions 3-81 (LPIIVKWGGQ…IMMMGTREES (79 aa)) constitute a Ubiquitin-like domain. Position 117 is an N6-acetyllysine (lysine 117). Positions 133–294 (PREGKKLLVL…LKLTQYLKEI (162 aa)) constitute an FCP1 homology domain. Positions 143, 145, and 253 each coordinate Mg(2+).

Requires Mg(2+) as cofactor.

It localises to the nucleus. It carries out the reaction O-phospho-L-seryl-[protein] + H2O = L-seryl-[protein] + phosphate. The catalysed reaction is O-phospho-L-threonyl-[protein] + H2O = L-threonyl-[protein] + phosphate. In terms of biological role, dephosphorylates 26S nuclear proteasomes, thereby decreasing their proteolytic activity. Recruited to the 19S regulatory particle of the 26S proteasome through its interaction with 19S component PSMD2/RPN1. Once recruited, dephosphorylates 19S component PSMC2/RPT1 which impairs PSMC2 ATPase activity and disrupts 26S proteasome assembly. Has also been reported to stimulate the proteolytic activity of the 26S proteasome. The sequence is that of Ubiquitin-like domain-containing CTD phosphatase 1 (UBLCP1) from Bos taurus (Bovine).